The primary structure comprises 98 residues: Defensin-A1 (98 aa).

An N-terminal signal peptide occupies residues 1–19; it reads MQTLSFLLALLFLVAQTPA. The propeptide occupies 20-62; it reads QPTGEGEKGGTIQEPEATEAQDTAAVLMAAGAADGDDSDTKQL. Cystine bridges form between Cys67–Cys94, Cys69–Cys83, and Cys73–Cys93. The propeptide occupies 97-98; it reads IK.

This sequence belongs to the alpha-defensin family. In terms of tissue distribution, highly expressed in intestine, and expressed at lower levels in lung and spleen.

The protein localises to the secreted. In terms of biological role, has antimicrobial activity. In Ornithorhynchus anatinus (Duckbill platypus), this protein is Defensin-A1.